An 80-amino-acid polypeptide reads, in one-letter code: Putative membrane protein insertion efficiency factor (80 aa).

This sequence belongs to the UPF0161 family.

The protein localises to the cell membrane. Its function is as follows. Could be involved in insertion of integral membrane proteins into the membrane. In Corynebacterium jeikeium (strain K411), this protein is Putative membrane protein insertion efficiency factor.